A 310-amino-acid chain; its full sequence is ADP-L-glycero-D-manno-heptose-6-epimerase (310 aa).

Residues 10-11 (FI), 31-32 (DN), K38, K53, 75-79 (EGACS), and N92 each bind NADP(+). The active-site Proton acceptor is the Y140. Residue K144 coordinates NADP(+). N169 contributes to the substrate binding site. NADP(+) contacts are provided by V170 and K178. Catalysis depends on K178, which acts as the Proton acceptor. Substrate-binding positions include S180, H187, 201 to 204 (FSGS), R209, and Y272.

The protein belongs to the NAD(P)-dependent epimerase/dehydratase family. HldD subfamily. As to quaternary structure, homopentamer. NADP(+) serves as cofactor.

It catalyses the reaction ADP-D-glycero-beta-D-manno-heptose = ADP-L-glycero-beta-D-manno-heptose. The protein operates within nucleotide-sugar biosynthesis; ADP-L-glycero-beta-D-manno-heptose biosynthesis; ADP-L-glycero-beta-D-manno-heptose from D-glycero-beta-D-manno-heptose 7-phosphate: step 4/4. Functionally, catalyzes the interconversion between ADP-D-glycero-beta-D-manno-heptose and ADP-L-glycero-beta-D-manno-heptose via an epimerization at carbon 6 of the heptose. In Pectobacterium carotovorum subsp. carotovorum (strain PC1), this protein is ADP-L-glycero-D-manno-heptose-6-epimerase.